The primary structure comprises 413 residues: GDP-mannose-dependent alpha-mannosyltransferase (413 aa).

It belongs to the glycosyltransferase group 1 family.

Its pathway is phospholipid metabolism; phosphatidylinositol metabolism. In terms of biological role, catalyzes the addition of a mannose residue from GDP-D-mannose to GlcAGroAc2 to generate 1,2-di-O-C16/C18:1-(alpha-D-mannopyranosyl)-(1-4)-(alpha-D-glucopyranosyluronic acid)-(1-3)-glycerol(ManGlcAGroAc2). The polypeptide is GDP-mannose-dependent alpha-mannosyltransferase (mgtA) (Corynebacterium glutamicum (strain ATCC 13032 / DSM 20300 / JCM 1318 / BCRC 11384 / CCUG 27702 / LMG 3730 / NBRC 12168 / NCIMB 10025 / NRRL B-2784 / 534)).